We begin with the raw amino-acid sequence, 92 residues long: Costars family protein ST45-2 (92 aa).

M1 is subject to N-acetylmethionine.

This sequence belongs to the costars family.

In Eutrema halophilum (Salt cress), this protein is Costars family protein ST45-2.